The chain runs to 478 residues: Protein nucleotidyltransferase YdiU (478 aa).

Residues glycine 84, glycine 86, arginine 87, lysine 107, aspartate 119, glycine 120, arginine 170, and arginine 177 each contribute to the ATP site. The active-site Proton acceptor is aspartate 246. Residues asparagine 247 and aspartate 256 each coordinate Mg(2+). An ATP-binding site is contributed by aspartate 256.

It belongs to the SELO family. Mg(2+) is required as a cofactor. It depends on Mn(2+) as a cofactor.

The enzyme catalyses L-seryl-[protein] + ATP = 3-O-(5'-adenylyl)-L-seryl-[protein] + diphosphate. It carries out the reaction L-threonyl-[protein] + ATP = 3-O-(5'-adenylyl)-L-threonyl-[protein] + diphosphate. The catalysed reaction is L-tyrosyl-[protein] + ATP = O-(5'-adenylyl)-L-tyrosyl-[protein] + diphosphate. It catalyses the reaction L-histidyl-[protein] + UTP = N(tele)-(5'-uridylyl)-L-histidyl-[protein] + diphosphate. The enzyme catalyses L-seryl-[protein] + UTP = O-(5'-uridylyl)-L-seryl-[protein] + diphosphate. It carries out the reaction L-tyrosyl-[protein] + UTP = O-(5'-uridylyl)-L-tyrosyl-[protein] + diphosphate. Its function is as follows. Nucleotidyltransferase involved in the post-translational modification of proteins. It can catalyze the addition of adenosine monophosphate (AMP) or uridine monophosphate (UMP) to a protein, resulting in modifications known as AMPylation and UMPylation. This is Protein nucleotidyltransferase YdiU from Escherichia coli (strain SE11).